A 712-amino-acid polypeptide reads, in one-letter code: Ribosomal RNA large subunit methyltransferase K/L (712 aa).

The THUMP domain maps to 46 to 157; it reads GAYQALLHSR…RENMVVSLDL (112 aa).

It belongs to the methyltransferase superfamily. RlmKL family.

Its subcellular location is the cytoplasm. The catalysed reaction is guanosine(2445) in 23S rRNA + S-adenosyl-L-methionine = N(2)-methylguanosine(2445) in 23S rRNA + S-adenosyl-L-homocysteine + H(+). The enzyme catalyses guanosine(2069) in 23S rRNA + S-adenosyl-L-methionine = N(2)-methylguanosine(2069) in 23S rRNA + S-adenosyl-L-homocysteine + H(+). Its function is as follows. Specifically methylates the guanine in position 2445 (m2G2445) and the guanine in position 2069 (m7G2069) of 23S rRNA. The chain is Ribosomal RNA large subunit methyltransferase K/L from Actinobacillus pleuropneumoniae serotype 7 (strain AP76).